A 74-amino-acid polypeptide reads, in one-letter code: Small ribosomal subunit protein bS21 (74 aa).

It belongs to the bacterial ribosomal protein bS21 family.

In Coxiella burnetii (strain Dugway 5J108-111), this protein is Small ribosomal subunit protein bS21.